We begin with the raw amino-acid sequence, 396 residues long: Acetylornithine aminotransferase 2 (396 aa).

Pyridoxal 5'-phosphate contacts are provided by residues 102 to 103 and Phe134; that span reads GA. N(2)-acetyl-L-ornithine is bound at residue Arg137. 219 to 222 serves as a coordination point for pyridoxal 5'-phosphate; sequence DEVQ. Lys248 is subject to N6-(pyridoxal phosphate)lysine. Thr276 serves as a coordination point for pyridoxal 5'-phosphate.

The protein belongs to the class-III pyridoxal-phosphate-dependent aminotransferase family. ArgD subfamily. As to quaternary structure, homodimer. The cofactor is pyridoxal 5'-phosphate.

Its subcellular location is the cytoplasm. It carries out the reaction N(2)-acetyl-L-ornithine + 2-oxoglutarate = N-acetyl-L-glutamate 5-semialdehyde + L-glutamate. It functions in the pathway amino-acid biosynthesis; L-arginine biosynthesis; N(2)-acetyl-L-ornithine from L-glutamate: step 4/4. This is Acetylornithine aminotransferase 2 from Bordetella bronchiseptica (strain ATCC BAA-588 / NCTC 13252 / RB50) (Alcaligenes bronchisepticus).